Consider the following 356-residue polypeptide: Tyrosine recombinase XerS (356 aa).

One can recognise a Core-binding (CB) domain in the interval 16–121 (IMPWYVLDYY…ALSSLYKYLT (106 aa)). Positions 169 to 354 (AFLDYVDKEY…VNDEQKNALD (186 aa)) constitute a Tyr recombinase domain. Residues arginine 210, lysine 234, histidine 306, arginine 309, and histidine 332 contribute to the active site. The active-site O-(3'-phospho-DNA)-tyrosine intermediate is the tyrosine 341.

Belongs to the 'phage' integrase family. XerS subfamily.

It is found in the cytoplasm. FtsK is required for recombination. In terms of biological role, site-specific tyrosine recombinase, which acts by catalyzing the cutting and rejoining of the recombining DNA molecules. Essential to convert dimers of the bacterial chromosome into monomers to permit their segregation at cell division. This chain is Tyrosine recombinase XerS, found in Streptococcus pyogenes serotype M49 (strain NZ131).